The primary structure comprises 293 residues: Small ribosomal subunit biogenesis GTPase RsgA (293 aa).

A CP-type G domain is found at 63–223 (KNELVRPPIA…VADTPGFSSL (161 aa)). GTP contacts are provided by residues 112–115 (SKMD) and 166–174 (GQSGVGKSS). Residues Cys-247, Cys-252, His-254, and Cys-260 each contribute to the Zn(2+) site.

This sequence belongs to the TRAFAC class YlqF/YawG GTPase family. RsgA subfamily. As to quaternary structure, monomer. Associates with 30S ribosomal subunit, binds 16S rRNA. Requires Zn(2+) as cofactor.

It is found in the cytoplasm. Its function is as follows. One of several proteins that assist in the late maturation steps of the functional core of the 30S ribosomal subunit. Helps release RbfA from mature subunits. May play a role in the assembly of ribosomal proteins into the subunit. Circularly permuted GTPase that catalyzes slow GTP hydrolysis, GTPase activity is stimulated by the 30S ribosomal subunit. In Bacillus anthracis, this protein is Small ribosomal subunit biogenesis GTPase RsgA.